Here is a 440-residue protein sequence, read N- to C-terminus: Thymidine phosphorylase (440 aa).

It belongs to the thymidine/pyrimidine-nucleoside phosphorylase family. Homodimer.

It catalyses the reaction thymidine + phosphate = 2-deoxy-alpha-D-ribose 1-phosphate + thymine. It participates in pyrimidine metabolism; dTMP biosynthesis via salvage pathway; dTMP from thymine: step 1/2. Functionally, the enzymes which catalyze the reversible phosphorolysis of pyrimidine nucleosides are involved in the degradation of these compounds and in their utilization as carbon and energy sources, or in the rescue of pyrimidine bases for nucleotide synthesis. The polypeptide is Thymidine phosphorylase (Escherichia coli (strain K12 / DH10B)).